A 354-amino-acid polypeptide reads, in one-letter code: Ferrochelatase (354 aa).

2 residues coordinate Fe cation: His-214 and Glu-295.

Belongs to the ferrochelatase family.

The protein localises to the cytoplasm. The catalysed reaction is heme b + 2 H(+) = protoporphyrin IX + Fe(2+). It functions in the pathway porphyrin-containing compound metabolism; protoheme biosynthesis; protoheme from protoporphyrin-IX: step 1/1. Catalyzes the ferrous insertion into protoporphyrin IX. The protein is Ferrochelatase of Burkholderia orbicola (strain AU 1054).